We begin with the raw amino-acid sequence, 396 residues long: Small ribosomal subunit protein uS9m (396 aa).

Lys287 is subject to N6-acetyllysine. The interval 374–396 is disordered; it reads PRVRERKKPGQEGARRKFTWKKR.

This sequence belongs to the universal ribosomal protein uS9 family. As to quaternary structure, component of the mitochondrial small ribosomal subunit (mt-SSU). Mature mammalian 55S mitochondrial ribosomes consist of a small (28S) and a large (39S) subunit. The 28S small subunit contains a 12S ribosomal RNA (12S mt-rRNA) and 30 different proteins. The 39S large subunit contains a 16S rRNA (16S mt-rRNA), a copy of mitochondrial valine transfer RNA (mt-tRNA(Val)), which plays an integral structural role, and 52 different proteins.

The protein resides in the mitochondrion. The sequence is that of Small ribosomal subunit protein uS9m (MRPS9) from Homo sapiens (Human).